A 1766-amino-acid polypeptide reads, in one-letter code: Putative ATP-dependent RNA helicase R366 (1766 aa).

A disordered region spans residues 209-239; that stretch reads KSSSNQNSNQSNQESNESNQEPNESNQEINQ. A compositionally biased stretch (low complexity) spans 210–239; the sequence is SSSNQNSNQSNQESNESNQEPNESNQEINQ. The Helicase ATP-binding domain occupies 656–865; it reads YHHYSNNRVL…RYYRRINDNR (210 aa). 669 to 676 is a binding site for ATP; it reads GATGVGKS. The DEAH box motif lies at 812 to 815; sequence DEAH. A Helicase C-terminal domain is found at 947–1116; sequence DIHKSIKAIN…TMVKLIKSYP (170 aa).

The protein belongs to the DEAD box helicase family. DEAH subfamily.

It catalyses the reaction ATP + H2O = ADP + phosphate + H(+). This is Putative ATP-dependent RNA helicase R366 from Acanthamoeba polyphaga mimivirus (APMV).